The sequence spans 262 residues: Flap endonuclease Xni (262 aa).

Aspartate 105 provides a ligand contact to Mg(2+). In terms of domain architecture, 5'-3' exonuclease spans 162–259 (ERSQFLDLMA…VIDSQPEKTI (98 aa)). The K(+) site is built by leucine 172, alanine 173, proline 181, isoleucine 183, and isoleucine 186. Residues 185–190 (GIGPKS) are interaction with DNA.

This sequence belongs to the Xni family. The cofactor is Mg(2+). Requires K(+) as cofactor.

Its function is as follows. Has flap endonuclease activity. During DNA replication, flap endonucleases cleave the 5'-overhanging flap structure that is generated by displacement synthesis when DNA polymerase encounters the 5'-end of a downstream Okazaki fragment. The polypeptide is Flap endonuclease Xni (Shewanella baltica (strain OS185)).